Reading from the N-terminus, the 503-residue chain is Probable protein kinase UbiB (503 aa).

A helical transmembrane segment spans residues 13-35 (TFYRYRLAGLCASLMGSGWICAL). One can recognise a Protein kinase domain in the interval 120 to 491 (EFETEPIASA…QQRQSLWLAV (372 aa)). Residues 126 to 134 (IASASIAQV) and lysine 148 contribute to the ATP site. Aspartate 283 functions as the Proton acceptor in the catalytic mechanism. The helical transmembrane segment at 485–502 (QSLWLAVIAVVLLLILLL) threads the bilayer.

Belongs to the ABC1 family. UbiB subfamily.

It localises to the cell inner membrane. It participates in cofactor biosynthesis; ubiquinone biosynthesis [regulation]. Functionally, is probably a protein kinase regulator of UbiI activity which is involved in aerobic coenzyme Q (ubiquinone) biosynthesis. The sequence is that of Probable protein kinase UbiB from Neisseria meningitidis serogroup A / serotype 4A (strain DSM 15465 / Z2491).